Here is a 193-residue protein sequence, read N- to C-terminus: p53 apoptosis effector related to PMP-22 (193 aa).

4 helical membrane passes run 12-32 (RWILPLLLLSAIAFDIIALAG), 81-101 (LFCGFIILCICFILSFFALCG), 110-130 (VIGGLLALAAIFQIISLVIYP), and 151-171 (WAYGFGWAATIILIGCSFFFC).

Belongs to the TMEM47 family. As to expression, expressed in the stratified squamous skin epithelium of the skin and the tongue, but not in simple epithelia (at protein level). Expressed in the oral epithelium, tongue epithelium and skin (at protein level). More abundant in areas of lower flow stress in the inner curvature compared to the outer curvature regions of the aorta (at protein level). Expressed in luminal cells and myoepithelium cells of the mammary epithelium (at protein level). Expression increases during the early stages of pregnancy before decreasing before birth, expression continues to be weak during involution which mirrors decreased desmosome abundance and organization at these time points (at protein level). Expressed by epithelial cells at the mucosal surface in the proximal colon (at protein level). Expressed in apoptotic cells.

Its subcellular location is the cell junction. The protein localises to the desmosome. It localises to the cell membrane. It is found in the cytoplasm. In terms of biological role, component of intercellular desmosome junctions. Plays a role in stratified epithelial integrity and cell-cell adhesion by promoting desmosome assembly. Thereby plays a role in barrier function of the skin against infection. Plays a role in mammary epithelial tissue homeostasis and remodeling during and after pregnancy, potentially via its involvement in desmosome cell-cell junctions. Required for tooth enamel development via facilitating desmosome-mediated ameloblast adhesion to the stratum intermedium during the transitional stage of amelogenesis. May also play a role in downstream transcriptional regulation of other genes involved in amelogenesis such as AMBN, ENAM, MMP20 and KLK4. Plays a role as an effector in the TP53-dependent apoptotic pathway. Positively regulates apoptosis in T-helper 17 (Th17) cell populations via caspase-dependent signaling. Promotes neutrophil transepithelial migration in response to chemoattractants such as hepoxilin A3 (HXA3), N-Formylmethionyl-leucyl-phenylalanine (fMLP) and CXCL8/IL-8. May act as a positive regulator of endothelial cell apoptosis in response to blood flow-derived shear stress. This Mus musculus (Mouse) protein is p53 apoptosis effector related to PMP-22.